Here is a 456-residue protein sequence, read N- to C-terminus: Methylenetetrahydrofolate--tRNA-(uracil-5-)-methyltransferase TrmFO (456 aa).

Residue 12-17 (GGGLAG) coordinates FAD.

This sequence belongs to the MnmG family. TrmFO subfamily. The cofactor is FAD.

Its subcellular location is the cytoplasm. It catalyses the reaction uridine(54) in tRNA + (6R)-5,10-methylene-5,6,7,8-tetrahydrofolate + NADH + H(+) = 5-methyluridine(54) in tRNA + (6S)-5,6,7,8-tetrahydrofolate + NAD(+). The enzyme catalyses uridine(54) in tRNA + (6R)-5,10-methylene-5,6,7,8-tetrahydrofolate + NADPH + H(+) = 5-methyluridine(54) in tRNA + (6S)-5,6,7,8-tetrahydrofolate + NADP(+). Catalyzes the folate-dependent formation of 5-methyl-uridine at position 54 (M-5-U54) in all tRNAs. The chain is Methylenetetrahydrofolate--tRNA-(uracil-5-)-methyltransferase TrmFO from Picosynechococcus sp. (strain ATCC 27264 / PCC 7002 / PR-6) (Agmenellum quadruplicatum).